Here is a 1365-residue protein sequence, read N- to C-terminus: Serine-aspartate repeat-containing protein D (1365 aa).

The first 35 residues, 1–35, serve as a signal peptide directing secretion; sequence MLNRENKTAITRKGMVSNRLNKFSIRKYTVGTASI. The YSIRK-G/S signaling motif motif lies at 23–34; that stretch reads FSIRKYTVGTAS. Residues 36–568 form a ligand binding A region region; that stretch reads LVGTTLIFGL…NNQSGGAGQE (533 aa). The tract at residues 54-185 is disordered; that stretch reads ESTNKELNEA…NKKVDAKTES (132 aa). 2 stretches are compositionally biased toward polar residues: residues 62-71 and 94-109; these read EATTSASDNQ and EMVSSQGNETTSNGNK. Basic and acidic residues predominate over residues 130-145; that stretch reads KSDEQASPKSTNEDLN. 2 stretches are compositionally biased toward polar residues: residues 146 to 155 and 163 to 173; these read TKQTISNQEA and NKSVVNAQPTN. The segment covering 174 to 183 has biased composition (basic and acidic residues); the sequence is EENKKVDAKT. 5 consecutive CNA-B domains span residues 569 to 680, 681 to 791, 792 to 901, 902 to 1012, and 1013 to 1123; these read VYKI…IYKP, KYNL…YKTP, KYNL…FYKP, TYNL…YKTP, and KYSL…EEDT. 3 disordered regions span residues 857-884, 972-991, and 1078-1341; these read ETPSGYTPTQVGSGTDEGIDSNGTSTTG, YTPTSVTSGNDTEKDSNGLT, and EKPA…SNNA. Composition is skewed to polar residues over residues 860–869 and 972–981; these read SGYTPTQVGS and YTPTSVTSGN. 2 stretches are compositionally biased toward acidic residues: residues 1091–1101 and 1118–1304; these read TEDDKDADGGE and YFEE…DSDS. The LPXTG sorting signal motif lies at 1328–1332; sequence LPETG. The residue at position 1331 (Thr-1331) is a Pentaglycyl murein peptidoglycan amidated threonine. Residues 1332-1365 constitute a propeptide, removed by sortase; that stretch reads GNENSGSNNATLFGGLFAALGSLLLFGRRKKQNK.

The protein belongs to the serine-aspartate repeat-containing protein (SDr) family. In terms of assembly, interacts with host DSG1; this interaction increases S.aureus adherence to keratinocytes.

Its subcellular location is the secreted. The protein localises to the cell wall. In terms of biological role, cell surface-associated calcium-binding protein which plays an important role in adhesion and pathogenesis. Mediates interactions with components of the extracellular matrix such as host DSG1 to promote bacterial adhesion to host cells. Contributes to the resistance to killing by innate immune components such as neutrophils present in blood and thus attenuates bacterial clearance. This is Serine-aspartate repeat-containing protein D (sdrD) from Staphylococcus aureus (strain MSSA476).